A 38-amino-acid polypeptide reads, in one-letter code: Large ribosomal subunit protein bL36 (38 aa).

The protein belongs to the bacterial ribosomal protein bL36 family.

The chain is Large ribosomal subunit protein bL36 from Bacteroides fragilis (strain ATCC 25285 / DSM 2151 / CCUG 4856 / JCM 11019 / LMG 10263 / NCTC 9343 / Onslow / VPI 2553 / EN-2).